A 524-amino-acid chain; its full sequence is Cysteine--tRNA ligase (524 aa).

C29 is a binding site for Zn(2+). A 'HIGH' region motif is present at residues 31 to 41; sequence PTVQAAPHVGH. Positions 207, 232, and 236 each coordinate Zn(2+). Low complexity predominate over residues 246 to 258; it reads ARPASNAASADSP. Residues 246–273 form a disordered region; that stretch reads ARPASNAASADSPGPGGGEPGGGEPSSG. A compositionally biased stretch (gly residues) spans 259-270; the sequence is GPGGGEPGGGEP. The 'KMSKS' region signature appears at 291–295; the sequence is KMSKS. K294 contacts ATP.

This sequence belongs to the class-I aminoacyl-tRNA synthetase family. As to quaternary structure, monomer. Zn(2+) is required as a cofactor.

It localises to the cytoplasm. It carries out the reaction tRNA(Cys) + L-cysteine + ATP = L-cysteinyl-tRNA(Cys) + AMP + diphosphate. The protein is Cysteine--tRNA ligase of Frankia casuarinae (strain DSM 45818 / CECT 9043 / HFP020203 / CcI3).